The following is a 494-amino-acid chain: DnaJ homolog subfamily C member 7 (494 aa).

Ala2 bears the N-acetylalanine mark. TPR repeat units follow at residues 28–61, 62–95, 96–129, 142–175, 210–243, 256–289, 294–327, and 328–361; these read AESF…CPNN, ASYY…DDSF, VRGH…DHKN, VMEY…APAC, ADAL…APDH, LKAK…DPNN, AKLY…DDTY, and IKAY…EKTK. Positions 381-451 constitute a J domain; that stretch reads DYYKILGVDK…KKKTRYDSGQ (71 aa). A Phosphoserine modification is found at Ser393.

Associates with complexes containing chaperones HSP70 and HSP90. Interacts with the GAP domain of NF1. Interacts with HSP90AA1. Interacts with HSPA1A/B; the interaction is enhanced by ATP. Interacts with HSP90AB1. Interacts with PGR. Interacts with RAD9A; the interaction is interrupted by UV and heat shock treatments. Interacts with HUS1 and RAD1. Interacts with NR1I3; this complex may also include HSP90 Interacts with HSPA8. Widely expressed with high levels in liver, skeletal muscle, kidney and testis.

It localises to the cytoplasm. Its subcellular location is the nucleus. It is found in the cytoskeleton. Acts as a co-chaperone regulating the molecular chaperones HSP70 and HSP90 in folding of steroid receptors, such as the glucocorticoid receptor and the progesterone receptor. Proposed to act as a recycling chaperone by facilitating the return of chaperone substrates to early stages of chaperoning if further folding is required. In vitro, induces ATP-independent dissociation of HSP90 but not of HSP70 from the chaperone-substrate complexes. Recruits NR1I3 to the cytoplasm. The sequence is that of DnaJ homolog subfamily C member 7 (Dnajc7) from Mus musculus (Mouse).